A 1404-amino-acid polypeptide reads, in one-letter code: DNA-directed RNA polymerase subunit beta' (1404 aa).

Zn(2+) contacts are provided by C72, C74, C87, and C90. Residues D462, D464, and D466 each contribute to the Mg(2+) site. Residues C816, C890, C897, and C900 each contribute to the Zn(2+) site.

It belongs to the RNA polymerase beta' chain family. In terms of assembly, the RNAP catalytic core consists of 2 alpha, 1 beta, 1 beta' and 1 omega subunit. When a sigma factor is associated with the core the holoenzyme is formed, which can initiate transcription. The cofactor is Mg(2+). It depends on Zn(2+) as a cofactor.

It catalyses the reaction RNA(n) + a ribonucleoside 5'-triphosphate = RNA(n+1) + diphosphate. In terms of biological role, DNA-dependent RNA polymerase catalyzes the transcription of DNA into RNA using the four ribonucleoside triphosphates as substrates. This is DNA-directed RNA polymerase subunit beta' from Azoarcus sp. (strain BH72).